The sequence spans 378 residues: MEPVIIGALILDVHAKPSTTPISGTTVPGQVLFAPGGVARNVADCIFKLGITPFMIGTLGLDGPANVLLKEWKLSMKGILRREDISTPIVSLVYDTNGEVAAGVAGVDAVENFLTPEWIQRFEYNISSARLLMVDANLSSLALEASCKLAAESSVPVWFEPVSVTKSQRIASIAKYVTIVSPNQDELIAMANALCAKNLFHPFRSDENKLSIEDMFRALKPAILVLLKNGVKVVIVTLGSNGALLCSKGNPKKALNIDRKFLRSGEVFKRVQSVCSPNRFSELGSNRSPSLFAMHFPTIPAKVKKLTGAGDCLVGGTVASLSDGLDLIQSLAVGIASAKAAVESDDNVPPEFKLDLISGDAELVYNGAKMLMVHQSML.

Pseudouridine contacts are provided by residues Asp12, Thr26, 37–41 (GVARN), Val38, Asn137, and Lys166. Residues Ser181 and Thr237 each coordinate Mg(2+). ATP is bound by residues Thr237, Gly239, Gly242, Thr298, Leu306, and Gly310. Asp311 is a pseudouridine binding site.

Belongs to the carbohydrate kinase PfkB family. In terms of assembly, forms homodimers.

Its subcellular location is the peroxisome. It catalyses the reaction pseudouridine + ATP = psi-UMP + ADP + H(+). Catalyzes the phosphorylation of pseudouridine to pseudouridine 5'-phosphate (PsiMP). Catalyzes the first step in a pseudouridine degradation pathway. Acts together with the pseudouridine 5'-phosphate glycosidase PUMY in the peroxisome to prevent toxic pseudouridine monophosphate accumulation. This is Pseudouridine kinase from Arabidopsis thaliana (Mouse-ear cress).